An 85-amino-acid polypeptide reads, in one-letter code: RNA-binding protein Hfq (85 aa).

The Sm domain maps to 10 to 70; it reads DAFLNQVRKE…ISTIIPQRPV (61 aa).

It belongs to the Hfq family. In terms of assembly, homohexamer.

Its function is as follows. RNA chaperone that binds small regulatory RNA (sRNAs) and mRNAs to facilitate mRNA translational regulation in response to envelope stress, environmental stress and changes in metabolite concentrations. Also binds with high specificity to tRNAs. The chain is RNA-binding protein Hfq from Carboxydothermus hydrogenoformans (strain ATCC BAA-161 / DSM 6008 / Z-2901).